The chain runs to 339 residues: Heat-inducible transcription repressor HrcA (339 aa).

It belongs to the HrcA family.

Functionally, negative regulator of class I heat shock genes (grpE-dnaK-dnaJ and groELS operons). Prevents heat-shock induction of these operons. The protein is Heat-inducible transcription repressor HrcA of Thermotoga neapolitana (strain ATCC 49049 / DSM 4359 / NBRC 107923 / NS-E).